The primary structure comprises 430 residues: Spermatogenic leucine zipper protein 1 (430 aa).

Positions 1 to 25 are disordered; sequence MASSAKSAEMPTISKTVNPTPDPHQ. Residues 62 to 102 are a coiled coil; sequence EQQTAQKFNNLLKEIKDILKNMAGFEEKITEAKELFEETNI. Ser-107 is subject to Phosphoserine. The tract at residues 166–177 is helix-loop-helix motif; that stretch reads KINEMLSTNLPV. Residues 178–244 are basic motif; that stretch reads SLAPEKEDNE…NVQEETMKIR (67 aa). Coiled-coil stretches lie at residues 214 to 269 and 316 to 351; these read LEEK…KLIK and SLQL…TLQE. At Ser-258 the chain carries Phosphoserine. The interval 303-324 is leucine-zipper; it reads LEEQVKKLSHDTYSLQLMAALL.

Interacts with PPP1CC isoform gamma-2. Post-translationally, phosphorylated by MAPK1/ERK2 and MAPK3/ERK1. As to expression, specifically and strongly expressed in the testis. Expressed in several tumor cell lines.

The protein resides in the cytoplasm. It localises to the nucleus. In terms of biological role, transcription factor that binds to the DNA sequence 5'-CANNTG-3'(E box) and the G-box motif. May play an important role in the regulation of cell proliferation and differentiation during spermatogenesis. In Homo sapiens (Human), this protein is Spermatogenic leucine zipper protein 1 (SPZ1).